A 284-amino-acid chain; its full sequence is 4-diphosphocytidyl-2-C-methyl-D-erythritol kinase (284 aa).

Lysine 14 is an active-site residue. 98–108 (PMGGGIGGGSS) contributes to the ATP binding site. Residue aspartate 140 is part of the active site.

The protein belongs to the GHMP kinase family. IspE subfamily.

It carries out the reaction 4-CDP-2-C-methyl-D-erythritol + ATP = 4-CDP-2-C-methyl-D-erythritol 2-phosphate + ADP + H(+). The protein operates within isoprenoid biosynthesis; isopentenyl diphosphate biosynthesis via DXP pathway; isopentenyl diphosphate from 1-deoxy-D-xylulose 5-phosphate: step 3/6. Functionally, catalyzes the phosphorylation of the position 2 hydroxy group of 4-diphosphocytidyl-2C-methyl-D-erythritol. This is 4-diphosphocytidyl-2-C-methyl-D-erythritol kinase from Shewanella woodyi (strain ATCC 51908 / MS32).